Consider the following 467-residue polypeptide: Mothers against decapentaplegic homolog 2 (467 aa).

Ser-2 carries the post-translational modification N-acetylserine. At Thr-8 the chain carries Phosphothreonine; by MAPK3. One can recognise an MH1 domain in the interval 10 to 176; it reads PVVKRLLGWK…YQRVETPVLP (167 aa). The residue at position 19 (Lys-19) is an N6-acetyllysine. Zn(2+) is bound by residues Cys-74, Cys-149, Cys-161, and His-166. Over residues 207–217 the composition is skewed to polar residues; it reads PAGIEPQSNYI. Residues 207-251 are disordered; the sequence is PAGIEPQSNYIPETPPPGYISEDGETSDQQLNQSMDTGSPAELSP. Position 220 is a phosphothreonine (Thr-220). Residues 221–225 carry the PY-motif motif; that stretch reads PPPGY. Positions 233 to 243 are enriched in polar residues; it reads SDQQLNQSMDT. Position 240 is a phosphoserine; by CAMK2 (Ser-240). Residues Ser-245, Ser-250, Ser-255, Ser-458, Ser-460, and Ser-464 each carry the phosphoserine modification. An MH2 domain is found at 274–467; it reads WCSIAYYELN…SPSVRCSSMS (194 aa). Residues Ser-465 and Ser-467 each carry the phosphoserine; by TGFBR1 modification.

This sequence belongs to the dwarfin/SMAD family. In terms of assembly, monomer; in the absence of TGF-beta. Heterodimer; in the presence of TGF-beta. Forms a heterodimer with co-SMAD, SMAD4, in the nucleus to form the transactivation complex SMAD2/SMAD4. Found in a complex with SMAD3 and TRIM33 upon addition of TGF-beta. Identified in a complex that contains at least ZNF451, SMAD2, SMAD3 and SMAD4. Interacts (via the MH2 domain) with ZFYVE9; may form trimers with the SMAD4 co-SMAD. Interacts with TAZ/WWRT1. Interacts with FOXH1. Interacts with SNW1. Interacts with CREB-binding protein (CBP) and EP300. Interacts with SNON. Interacts with ALK4/ACVR1B. Interacts with SKOR1. Interacts with SKOR2. Interacts with PRDM16. Interacts (via MH2 domain) with LEMD3. Interacts with RBPMS. Interacts with WWP1. Interacts (dephosphorylated form, via the MH1 and MH2 domains) with RANBP3 (via its C-terminal R domain); the interaction results in the export of dephosphorylated SMAD3 out of the nucleus and termination of the TGF-beta signaling. Interacts with PDPK1 (via PH domain). Interacts with DAB2; the interactions are enhanced upon TGF-beta stimulation. Interacts with USP15. Interacts with PPP5C. Interacts with LDLRAD4 (via the SMAD interaction motif). Interacts (via MH2 domain) with PMEPA1 (via the SMAD interaction motif). Interacts with ZFHX3. Interacts with ZNF451. Interacts with SMURF2 when phosphorylated on Ser-465/467. Interacts with PPM1A. Interacts with TGF-beta. Interacts with TGFBR1. Interacts with TGIF. Interacts with SMAD3 and TRIM33. Interacts with ZNF580. Interacts with NEDD4L in response to TGF-beta. Interacts with HGS. Interacts with AIP1. Interacts with WWP1. Interacts with PML. Interacts weakly with ZNF8. Interacts (when phosphorylated) with RNF111; RNF111 acts as an enhancer of the transcriptional responses by mediating ubiquitination and degradation of SMAD2 inhibitors. Interacts with YAP1 (when phosphorylated at 'Ser-127'). Interacts when phosphorylated with IPO7; the interaction facilitates translocation of SMAD2 to the nucleus. Interacts with MTMR4; negatively regulates TGF-beta signaling through SMAD2 dephosphorylation and retention in endosomes. In terms of processing, phosphorylated on one or several of Thr-220, Ser-245, Ser-250, and Ser-255. In response to TGF-beta, phosphorylated on Ser-465/467 by TGF-beta and activin type 1 receptor kinases. TGF-beta-induced Ser-465/467 phosphorylation declines progressively in a KMT5A-dependent manner. Able to interact with SMURF2 when phosphorylated on Ser-465/467, recruiting other proteins, such as SNON, for degradation. In response to decorin, the naturally occurring inhibitor of TGF-beta signaling, phosphorylated on Ser-240 by CaMK2. Phosphorylated by MAPK3 upon EGF stimulation; which increases transcriptional activity and stability, and is blocked by calmodulin. Phosphorylated by PDPK1. Post-translationally, in response to TGF-beta, ubiquitinated by NEDD4L; which promotes its degradation. Monoubiquitinated, leading to prevent DNA-binding. Deubiquitination by USP15 alleviates inhibition and promotes activation of TGF-beta target genes. Ubiquitinated by RNF111, leading to its degradation: only SMAD2 proteins that are 'in use' are targeted by RNF111, RNF111 playing a key role in activating SMAD2 and regulating its turnover. Acetylated on Lys-19 by coactivators in response to TGF-beta signaling, which increases transcriptional activity. Isoform short: Acetylation increases DNA binding activity in vitro and enhances its association with target promoters in vivo. Acetylation in the nucleus by EP300 is enhanced by TGF-beta. In terms of tissue distribution, expressed at high levels in skeletal muscle, endothelial cells, heart and placenta.

The protein resides in the cytoplasm. It is found in the nucleus. Receptor-regulated SMAD (R-SMAD) that is an intracellular signal transducer and transcriptional modulator activated by TGF-beta (transforming growth factor) and activin type 1 receptor kinases. Binds the TRE element in the promoter region of many genes that are regulated by TGF-beta and, on formation of the SMAD2/SMAD4 complex, activates transcription. Promotes TGFB1-mediated transcription of odontoblastic differentiation genes in dental papilla cells. Positively regulates PDPK1 kinase activity by stimulating its dissociation from the 14-3-3 protein YWHAQ which acts as a negative regulator. May act as a tumor suppressor in colorectal carcinoma. The polypeptide is Mothers against decapentaplegic homolog 2 (SMAD2) (Homo sapiens (Human)).